The sequence spans 173 residues: Cytidylate kinase (173 aa).

7–15 provides a ligand contact to ATP; it reads GLAGTGTST.

Belongs to the cytidylate kinase family. Type 2 subfamily.

It is found in the cytoplasm. The catalysed reaction is CMP + ATP = CDP + ADP. It carries out the reaction dCMP + ATP = dCDP + ADP. The chain is Cytidylate kinase from Methanosphaera stadtmanae (strain ATCC 43021 / DSM 3091 / JCM 11832 / MCB-3).